The primary structure comprises 37 residues: Cytochrome b6-f complex subunit 7 (37 aa).

Residues 11 to 29 traverse the membrane as a helical segment; that stretch reads AVILMVLVLFGLAWGFLIL.

It belongs to the PetM family. As to quaternary structure, the 4 large subunits of the cytochrome b6-f complex are cytochrome b6, subunit IV (17 kDa polypeptide, PetD), cytochrome f and the Rieske protein, while the 4 small subunits are PetG, PetL, PetM and PetN. The complex functions as a dimer.

The protein resides in the cellular thylakoid membrane. Component of the cytochrome b6-f complex, which mediates electron transfer between photosystem II (PSII) and photosystem I (PSI), cyclic electron flow around PSI, and state transitions. The protein is Cytochrome b6-f complex subunit 7 of Crocosphaera subtropica (strain ATCC 51142 / BH68) (Cyanothece sp. (strain ATCC 51142)).